A 252-amino-acid polypeptide reads, in one-letter code: Geranylgeranylglyceryl phosphate synthase (252 aa).

Mg(2+) is bound by residues D25 and S54. Sn-glycerol 1-phosphate is bound by residues 174–180 (FMDAGSG), 205–206 (GG), and 227–228 (GN).

This sequence belongs to the GGGP/HepGP synthase family. Group II subfamily. In terms of assembly, homohexamer. Requires Mg(2+) as cofactor.

It carries out the reaction sn-glycerol 1-phosphate + (2E,6E,10E)-geranylgeranyl diphosphate = sn-3-O-(geranylgeranyl)glycerol 1-phosphate + diphosphate. Its function is as follows. Prenyltransferase that catalyzes the transfer of the geranylgeranyl moiety of geranylgeranyl diphosphate (GGPP) to the C3 hydroxyl of sn-glycerol-1-phosphate (G1P). This is Geranylgeranylglyceryl phosphate synthase from Chitinophaga pinensis (strain ATCC 43595 / DSM 2588 / LMG 13176 / NBRC 15968 / NCIMB 11800 / UQM 2034).